A 346-amino-acid polypeptide reads, in one-letter code: Phosphoribosylformylglycinamidine cyclo-ligase (346 aa).

Belongs to the AIR synthase family.

It localises to the cytoplasm. It catalyses the reaction 2-formamido-N(1)-(5-O-phospho-beta-D-ribosyl)acetamidine + ATP = 5-amino-1-(5-phospho-beta-D-ribosyl)imidazole + ADP + phosphate + H(+). Its pathway is purine metabolism; IMP biosynthesis via de novo pathway; 5-amino-1-(5-phospho-D-ribosyl)imidazole from N(2)-formyl-N(1)-(5-phospho-D-ribosyl)glycinamide: step 2/2. The sequence is that of Phosphoribosylformylglycinamidine cyclo-ligase from Vibrio parahaemolyticus serotype O3:K6 (strain RIMD 2210633).